The sequence spans 554 residues: Intraflagellar transport protein 56 (554 aa).

The tract at residues 1 to 23 (MMLSRAKPAVGNEVQQIDKKKKK) is disordered. 4 TPR repeats span residues 57–90 (EDTE…EGCN), 92–125 (DVWV…LQNR), 151–184 (IEDQ…NRDF), and 468–501 (ANDC…EGKR).

It belongs to the IFT56 family. Component of the IFT complex B.

It localises to the cell projection. The protein localises to the cilium. Component of the intraflagellar transport (IFT) complex B required for transport of proteins in the motile cilium. Required for transport of specific ciliary cargo proteins related to motility, while it is neither required for IFT complex B assembly or motion nor for cilium assembly. Plays a key role in maintaining the integrity of the IFT complex B and the proper ciliary localization of the IFT complex B components. Essential for maintaining proper microtubule organization within the ciliary axoneme. The protein is Intraflagellar transport protein 56 of Xenopus tropicalis (Western clawed frog).